Reading from the N-terminus, the 61-residue chain is Small ribosomal subunit protein uS14 (61 aa).

Residues Cys-24, Cys-27, Cys-40, and Cys-43 each contribute to the Zn(2+) site.

This sequence belongs to the universal ribosomal protein uS14 family. Zinc-binding uS14 subfamily. As to quaternary structure, part of the 30S ribosomal subunit. Contacts proteins S3 and S10. Zn(2+) serves as cofactor.

Its function is as follows. Binds 16S rRNA, required for the assembly of 30S particles and may also be responsible for determining the conformation of the 16S rRNA at the A site. The protein is Small ribosomal subunit protein uS14 of Treponema denticola (strain ATCC 35405 / DSM 14222 / CIP 103919 / JCM 8153 / KCTC 15104).